Here is a 300-residue protein sequence, read N- to C-terminus: Delta-9 desaturase-like 4 protein (300 aa).

The next 2 membrane-spanning stretches (helical) occupy residues 39–59 and 61–81; these read VVVI…WEAL and FGLV…HRNL. A Histidine box-1 motif is present at residues 78-83; sequence HRNLSH. The short motif at 115–119 is the Histidine box-2 element; it reads HRFHH. 2 consecutive transmembrane segments (helical) span residues 175-195 and 200-220; these read IAVH…LPYL and GVGI…CHIW. Residues 247-251 carry the Histidine box-3 motif; sequence HNNHH.

Belongs to the fatty acid desaturase type 1 family. Fe cation is required as a cofactor.

The protein localises to the endoplasmic reticulum membrane. The protein operates within lipid metabolism; polyunsaturated fatty acid biosynthesis. The chain is Delta-9 desaturase-like 4 protein from Arabidopsis thaliana (Mouse-ear cress).